The sequence spans 448 residues: N-succinylarginine dihydrolase (448 aa).

Residues 19–28, asparagine 110, and 137–138 contribute to the substrate site; these read GGLSYGNVAS and HR. Residue glutamate 174 is part of the active site. Arginine 214 serves as a coordination point for substrate. Residue histidine 250 is part of the active site. Positions 252 and 365 each coordinate substrate. Catalysis depends on cysteine 371, which acts as the Nucleophile.

This sequence belongs to the succinylarginine dihydrolase family. As to quaternary structure, homodimer.

The enzyme catalyses N(2)-succinyl-L-arginine + 2 H2O + 2 H(+) = N(2)-succinyl-L-ornithine + 2 NH4(+) + CO2. Its pathway is amino-acid degradation; L-arginine degradation via AST pathway; L-glutamate and succinate from L-arginine: step 2/5. Functionally, catalyzes the hydrolysis of N(2)-succinylarginine into N(2)-succinylornithine, ammonia and CO(2). In Pseudomonas fluorescens (strain Pf0-1), this protein is N-succinylarginine dihydrolase.